The primary structure comprises 160 residues: 6,7-dimethyl-8-ribityllumazine synthase (160 aa).

5-amino-6-(D-ribitylamino)uracil is bound by residues phenylalanine 22, 57–59, and 81–83; these read TYE and TII. Residue 86 to 87 participates in (2S)-2-hydroxy-3-oxobutyl phosphate binding; it reads QT. Catalysis depends on histidine 89, which acts as the Proton donor. Leucine 114 is a binding site for 5-amino-6-(D-ribitylamino)uracil. Arginine 128 lines the (2S)-2-hydroxy-3-oxobutyl phosphate pocket.

The protein belongs to the DMRL synthase family. As to quaternary structure, forms an icosahedral capsid composed of 60 subunits, arranged as a dodecamer of pentamers.

The catalysed reaction is (2S)-2-hydroxy-3-oxobutyl phosphate + 5-amino-6-(D-ribitylamino)uracil = 6,7-dimethyl-8-(1-D-ribityl)lumazine + phosphate + 2 H2O + H(+). It participates in cofactor biosynthesis; riboflavin biosynthesis; riboflavin from 2-hydroxy-3-oxobutyl phosphate and 5-amino-6-(D-ribitylamino)uracil: step 1/2. In terms of biological role, catalyzes the formation of 6,7-dimethyl-8-ribityllumazine by condensation of 5-amino-6-(D-ribitylamino)uracil with 3,4-dihydroxy-2-butanone 4-phosphate. This is the penultimate step in the biosynthesis of riboflavin. The sequence is that of 6,7-dimethyl-8-ribityllumazine synthase from Buchnera aphidicola subsp. Acyrthosiphon pisum (strain APS) (Acyrthosiphon pisum symbiotic bacterium).